The sequence spans 344 residues: Cyanuric acid amidohydrolase (344 aa).

The tract at residues 1 to 91 (MTVVDIVKRT…ASAFVGTDRP (91 aa)) is RU A. Substrate contacts are provided by residues Arg51 and 71–72 (SG). The interval 97–232 (ALVAAVGRTA…CHILVLGNSP (136 aa)) is RU B. Lys146 is a catalytic residue. Substrate is bound by residues Arg178 and 215-216 (SS). The Nucleophile role is filled by Ser215. An RU C region spans residues 238–344 (LRAVHGVMRD…PVTVVYRVAS (107 aa)). Glu276 is a Mg(2+) binding site. Residues Arg303 and 322-323 (SG) each bind substrate. Mg(2+) is bound by residues Ala325, Gln328, Gly329, Pro330, and Gly333.

It belongs to the cyclic amide hydrolase (CyAH) family. As to quaternary structure, homotetramer.

It carries out the reaction cyanurate + H2O = 1-carboxybiuret + H(+). It functions in the pathway xenobiotic degradation; atrazine degradation; biuret from cyanurate: step 1/1. Its activity is regulated as follows. Inhibited by barbituric acid. Functionally, responsible for the hydrolysis of cyanuric acid, an intermediate formed during catabolism of s-triazine based compounds in herbicides such as atrazine and polymers such as melamine. Catalyzes the hydrolytic opening of the s-triazine ring of cyanuric acid (2,4,6-trihydroxy-s-triazine) to yield carbon dioxide and carboxybiuret, which spontaneously decarboxylates to biuret. The sequence is that of Cyanuric acid amidohydrolase from Pseudonocardia dioxanivorans (strain ATCC 55486 / DSM 44775 / JCM 13855 / CB1190).